Reading from the N-terminus, the 497-residue chain is Cytochrome P450 71A12 (497 aa).

The helical transmembrane segment at 4-24 (ILMVSLCLTTLITLFLLKQFL) threads the bilayer. Residue Cys-439 participates in heme binding.

The protein belongs to the cytochrome P450 family. Heme is required as a cofactor.

The protein resides in the membrane. Its function is as follows. Converts indole-3-acetaldoxime to indole cyanohydrin. Involved in the biosynthetic pathway to 4-hydroxyindole-3-carbonyl nitrile (4-OH-ICN), a cyanogenic metabolite required for inducible pathogen defense. In Arabidopsis thaliana (Mouse-ear cress), this protein is Cytochrome P450 71A12 (CYP71A12).